A 147-amino-acid polypeptide reads, in one-letter code: Hemoglobin subunit beta-H0 (147 aa).

The Globin domain maps to 3 to 147 (HFTAEEKAAI…VATALSHKYH (145 aa)). Heme b contacts are provided by His64 and His93.

It belongs to the globin family. In terms of assembly, heterotetramer of two alpha chains and two beta chains. Red blood cells.

This is a minor early embryonic beta chain. The protein is Hemoglobin subunit beta-H0 (Hbb-bh0) of Mus musculus (Mouse).